A 188-amino-acid polypeptide reads, in one-letter code: Protein YecM (188 aa).

The protein to H.influenzae HI_1582/HI_1581.

In Escherichia coli (strain K12), this protein is Protein YecM (yecM).